We begin with the raw amino-acid sequence, 204 residues long: MIEVRDLGVSRGGLPVLAGVNFALSGGEALVLRGPNGIGKTTLLRTLARLQLPLAGEILGDAEDIAYAAHADGVKLTLTVAENLSFWSRVFAGGDPAVAIAAFNLDALQHRPAGGLSAGQKRRLSLARLMVTGRRLWILDEPTVSLDAASVQLFASSIRAHLASGGAAIMATHIDLGIEGRVLDLGPFKAKLPALDAEDLGGFL.

Residues 2–204 (IEVRDLGVSR…LDAEDLGGFL (203 aa)) enclose the ABC transporter domain. ATP is bound at residue 34 to 41 (GPNGIGKT).

Belongs to the ABC transporter superfamily. CcmA exporter (TC 3.A.1.107) family. As to quaternary structure, the complex is composed of two ATP-binding proteins (CcmA) and two transmembrane proteins (CcmB).

The protein resides in the cell inner membrane. The enzyme catalyses heme b(in) + ATP + H2O = heme b(out) + ADP + phosphate + H(+). Part of the ABC transporter complex CcmAB involved in the biogenesis of c-type cytochromes; once thought to export heme, this seems not to be the case, but its exact role is uncertain. Responsible for energy coupling to the transport system. The polypeptide is Cytochrome c biogenesis ATP-binding export protein CcmA (Ruegeria sp. (strain TM1040) (Silicibacter sp.)).